Consider the following 488-residue polypeptide: V-type proton ATPase subunit B 1 (488 aa).

The protein belongs to the ATPase alpha/beta chains family. In terms of assembly, V-ATPase is a heteromultimeric enzyme composed of a peripheral catalytic V1 complex (main components: subunits A, B, C, D, E, and F) attached to an integral membrane V0 proton pore complex (main component: the proteolipid protein).

In terms of biological role, non-catalytic subunit of the peripheral V1 complex of vacuolar ATPase. V-ATPase is responsible for acidifying a variety of intracellular compartments in eukaryotic cells. The sequence is that of V-type proton ATPase subunit B 1 from Hordeum vulgare (Barley).